The chain runs to 329 residues: Ketol-acid reductoisomerase (NADP(+)) (329 aa).

The KARI N-terminal Rossmann domain occupies T2–T182. Residues Y25 to Q28, S51, S53, and D83 to Q86 contribute to the NADP(+) site. H108 is a catalytic residue. G134 provides a ligand contact to NADP(+). The KARI C-terminal knotted domain maps to N183 to L328. Residues D191, E195, E227, and E231 each coordinate Mg(2+). S252 is a binding site for substrate.

The protein belongs to the ketol-acid reductoisomerase family. It depends on Mg(2+) as a cofactor.

The enzyme catalyses (2R)-2,3-dihydroxy-3-methylbutanoate + NADP(+) = (2S)-2-acetolactate + NADPH + H(+). It carries out the reaction (2R,3R)-2,3-dihydroxy-3-methylpentanoate + NADP(+) = (S)-2-ethyl-2-hydroxy-3-oxobutanoate + NADPH + H(+). It participates in amino-acid biosynthesis; L-isoleucine biosynthesis; L-isoleucine from 2-oxobutanoate: step 2/4. Its pathway is amino-acid biosynthesis; L-valine biosynthesis; L-valine from pyruvate: step 2/4. In terms of biological role, involved in the biosynthesis of branched-chain amino acids (BCAA). Catalyzes an alkyl-migration followed by a ketol-acid reduction of (S)-2-acetolactate (S2AL) to yield (R)-2,3-dihydroxy-isovalerate. In the isomerase reaction, S2AL is rearranged via a Mg-dependent methyl migration to produce 3-hydroxy-3-methyl-2-ketobutyrate (HMKB). In the reductase reaction, this 2-ketoacid undergoes a metal-dependent reduction by NADPH to yield (R)-2,3-dihydroxy-isovalerate. In Prochlorococcus marinus (strain MIT 9312), this protein is Ketol-acid reductoisomerase (NADP(+)).